We begin with the raw amino-acid sequence, 441 residues long: COP9 signalosome complex subunit 1 (441 aa).

The segment at 1-28 is disordered; it reads MERDEEASGPMMEMCTNGGEETSNRRPI. Residues 230-400 enclose the PCI domain; the sequence is KYKLAARKFL…KILYARHADQ (171 aa).

The protein belongs to the CSN1 family. In terms of assembly, component of the CSN complex, probably composed of CSN1, CSN2, CSN3, CSN4, CSN5 (CSN5A or CSN5B), CSN6 (CSN6A or CSN6B), CSN7 and CSN8. Interacts with itself and (via PCI domain) with CSN7 (via PCI domain). In the CSN complex, it probably interacts directly with CSN2, CSN3, CSN4 and CSN5B. Interacts with the 26S proteasome subunit RPN6. Interacts (via N-terminal domain) with TSA1 (via C-terminal domain). Binds to the translation initiation factors TIF3C1, TIF3E1 and TIF3H1. Expressed in leaves, flowers, immature siliques, and light-grown roots.

Its subcellular location is the cytoplasm. The protein localises to the nucleus. In terms of biological role, component of the COP9 signalosome complex (CSN), a complex involved in various cellular and developmental processes such as photomorphogenesis and auxin and jasmonate responses. The CSN complex is an essential regulator of the ubiquitin (Ubl) conjugation pathway by mediating the deneddylation of the cullin subunits of SCF-type E3 ligase complexes, leading to decrease the Ubl ligase activity of SCF. It is involved in repression of photomorphogenesis in darkness by regulating the activity of COP1-containing Ubl ligase complexes. The complex is also required for degradation of IAA6 by regulating the activity of the Ubl ligase SCF-TIR complex. In the complex, it plays a central role in CSN assembly. The chain is COP9 signalosome complex subunit 1 (CSN1) from Arabidopsis thaliana (Mouse-ear cress).